A 234-amino-acid polypeptide reads, in one-letter code: Large ribosomal subunit protein uL1 (234 aa).

It belongs to the universal ribosomal protein uL1 family. Part of the 50S ribosomal subunit.

In terms of biological role, binds directly to 23S rRNA. The L1 stalk is quite mobile in the ribosome, and is involved in E site tRNA release. Protein L1 is also a translational repressor protein, it controls the translation of the L11 operon by binding to its mRNA. This is Large ribosomal subunit protein uL1 from Aliivibrio salmonicida (strain LFI1238) (Vibrio salmonicida (strain LFI1238)).